The following is a 204-amino-acid chain: uncharacterized protein (204 aa).

A signal peptide spans 1–21; sequence MIKKFLLFAMLNIFLTNKAHS.

This is an uncharacterized protein from Borreliella burgdorferi (strain ATCC 35210 / DSM 4680 / CIP 102532 / B31) (Borrelia burgdorferi).